The sequence spans 770 residues: ATP-dependent RNA helicase HCA4 (770 aa).

Positions 41–69 (KFFKDLPISDPTLKGLRESSFIKLTEIQA) match the Q motif motif. Positions 72-246 (IPVSLQGHDV…RLSLTDYKTV (175 aa)) constitute a Helicase ATP-binding domain. ATP is bound at residue 85–92 (AKTGSGKT). Positions 194–197 (DEAD) match the DEAD box motif. Residues 278 to 437 (KLDILFSFIK…SIKPQLQSLL (160 aa)) enclose the Helicase C-terminal domain. 4 positions are modified to phosphoserine: Ser-692, Ser-710, Ser-714, and Ser-743. The segment at 705 to 724 (GTGNLSDDMSDGDMPDSEGH) is disordered.

Belongs to the DEAD box helicase family. DDX10/DBP4 subfamily. Interacts with the U3 and U14 snoRNAs. Associates with pre-ribosomal complexes.

Its subcellular location is the nucleus. It localises to the nucleolus. It catalyses the reaction ATP + H2O = ADP + phosphate + H(+). Its function is as follows. ATP-dependent RNA helicase required for ribosome biogenesis. Involved in the release of U14 snoRNA in pre-ribosomal complexes. Required for pre-rRNA cleavage at site A2. In Saccharomyces cerevisiae (strain ATCC 204508 / S288c) (Baker's yeast), this protein is ATP-dependent RNA helicase HCA4 (HCA4).